Here is a 95-residue protein sequence, read N- to C-terminus: Small ribosomal subunit protein bS6 (95 aa).

This sequence belongs to the bacterial ribosomal protein bS6 family.

Its function is as follows. Binds together with bS18 to 16S ribosomal RNA. In Geobacillus sp. (strain WCH70), this protein is Small ribosomal subunit protein bS6.